The sequence spans 1086 residues: Transcription initiation factor TFIID subunit 2 (1086 aa).

Residues 1–11 (MDFSEASTSGD) are compositionally biased toward polar residues. Disordered regions lie at residues 1–53 (MDFS…PPPV) and 1064–1086 (GYEA…NLMQ). 2 stretches are compositionally biased toward pro residues: residues 19–36 (PFPP…PPLA) and 44–53 (APPPLQPPPV). The span at 1067–1078 (AARRSPPRRDFG) shows a compositional bias: basic and acidic residues.

The protein belongs to the TAF2 family. Component of the TFIID basal transcription factor complex, composed of TATA-box-binding protein tbp-1, and a number of TBP-associated factors (TAFs).

It is found in the nucleus. Functionally, the TFIID basal transcription factor complex plays a major role in the initiation of RNA polymerase II (Pol II)-dependent transcription. TFIID recognizes and binds promoters via its subunit tbp-1, a TATA-box-binding protein, and promotes assembly of the pre-initiation complex (PIC). The TFIID complex consists of tbp-1 and TBP-associated factors (TAFs), including taf-2. May regulate RNA polymerase II activity and thereby may control transcription initiation by RNA polymerase II. In Caenorhabditis elegans, this protein is Transcription initiation factor TFIID subunit 2.